Here is a 971-residue protein sequence, read N- to C-terminus: 116 kDa U5 small nuclear ribonucleoprotein component (971 aa).

At methionine 1 the chain carries N-acetylmethionine. The segment at 1–52 is disordered; that stretch reads MDTDLYDEFGNYIGPELDSDEDDDELGRETKDLDEDEDEDEDDVGEHEDDHP. Acidic residues predominate over residues 17–47; sequence LDSDEDDDELGRETKDLDEDEDEDEDDVGEH. Serine 19 is subject to Phosphoserine. Residue lysine 63 forms a Glycyl lysine isopeptide (Lys-Gly) (interchain with G-Cter in SUMO1); alternate linkage. Residue lysine 63 forms a Glycyl lysine isopeptide (Lys-Gly) (interchain with G-Cter in SUMO2); alternate linkage. Position 85 is a phosphothreonine (threonine 85). Positions 126–408 constitute a tr-type G domain; it reads ELIRNVTLCG…GIHLTKEELK (283 aa). Residues 135–142, 203–207, and 257–260 contribute to the GTP site; these read GHLHHGKT, DTPGH, and NKID.

The protein belongs to the TRAFAC class translation factor GTPase superfamily. Classic translation factor GTPase family. EF-G/EF-2 subfamily. Component of the U5 snRNP and the U4/U6-U5 tri-snRNP complex, a building block of the spliceosome. The U4/U6-U5 tri-snRNP complex is composed of the U4, U6 and U5 snRNAs and at least PRPF3, PRPF4, PRPF6, PRPF8, PRPF31, SNRNP200, TXNL4A, SNRNP40, DDX23, CD2BP2, PPIH, SNU13, EFTUD2, SART1 and USP39. Component of the pre-catalytic, catalytic and post-catalytic spliceosome complexes. Component of the minor spliceosome, which splices U12-type introns. Within this complex, interacts with CRIPT. Interacts with ERBB4 and PRPF8. Interacts with PIH1D1. Interacts with RPAP3 and URI1 in a ZNHIT2-dependent manner. Interacts with NRDE2. Interacts with FAM50A. Interacts with UBL5.

It is found in the nucleus. Functionally, required for pre-mRNA splicing as component of the spliceosome, including pre-catalytic, catalytic and post-catalytic spliceosomal complexes. Component of the U5 snRNP and the U4/U6-U5 tri-snRNP complex, a building block of the spliceosome. As a component of the minor spliceosome, involved in the splicing of U12-type introns in pre-mRNAs. This chain is 116 kDa U5 small nuclear ribonucleoprotein component (Eftud2), found in Mus musculus (Mouse).